Consider the following 316-residue polypeptide: Methionyl-tRNA formyltransferase (316 aa).

114–117 (SLLP) serves as a coordination point for (6S)-5,6,7,8-tetrahydrofolate.

This sequence belongs to the Fmt family.

It carries out the reaction L-methionyl-tRNA(fMet) + (6R)-10-formyltetrahydrofolate = N-formyl-L-methionyl-tRNA(fMet) + (6S)-5,6,7,8-tetrahydrofolate + H(+). Its function is as follows. Attaches a formyl group to the free amino group of methionyl-tRNA(fMet). The formyl group appears to play a dual role in the initiator identity of N-formylmethionyl-tRNA by promoting its recognition by IF2 and preventing the misappropriation of this tRNA by the elongation apparatus. The sequence is that of Methionyl-tRNA formyltransferase from Aromatoleum aromaticum (strain DSM 19018 / LMG 30748 / EbN1) (Azoarcus sp. (strain EbN1)).